Here is a 98-residue protein sequence, read N- to C-terminus: NADH-ubiquinone oxidoreductase chain 4L (98 aa).

The next 3 membrane-spanning stretches (helical) occupy residues 1-21 (MVLI…GVLI), 36-56 (MMLS…MFSI), and 61-81 (LILL…LVTI).

The protein belongs to the complex I subunit 4L family. In terms of assembly, core subunit of respiratory chain NADH dehydrogenase (Complex I) which is composed of 45 different subunits.

The protein localises to the mitochondrion inner membrane. The enzyme catalyses a ubiquinone + NADH + 5 H(+)(in) = a ubiquinol + NAD(+) + 4 H(+)(out). Its function is as follows. Core subunit of the mitochondrial membrane respiratory chain NADH dehydrogenase (Complex I) which catalyzes electron transfer from NADH through the respiratory chain, using ubiquinone as an electron acceptor. Part of the enzyme membrane arm which is embedded in the lipid bilayer and involved in proton translocation. This Metachirus nudicaudatus (Brown four-eyed opossum) protein is NADH-ubiquinone oxidoreductase chain 4L (MT-ND4L).